Reading from the N-terminus, the 655-residue chain is MAAGVAAWLPFARAAAIGWMPVANCPMPLAPADKNKRQDELIVLNVSGRRFQTWRTTLERYPDTLLGSTEKEFFFNEDTKEYFFDRDPEVFRCVLNFYRTGKLHYPRYECISAYDDELAFYGILPEIIGDCCYEEYKDRKRENAERLMDDNDSENNQESMPSLSFRQTMWRAFENPHTSTLALVFYYVTGFFIAVSVITNVVETVPCGTVPGSKELPCGERYSVAFFCLDTACVMIFTVEYLLRLFAAPSRYRFIRSVMSIIDVVAIMPYYIGLVMTNNEDVSGAFVTLRVFRVFRIFKFSRHSQGLRILGYTLKSCASELGFLLFSLTMAIIIFATVMFYAEKGSSASKFTSIPASFWYTIVTMTTLGYGDMVPKTIAGKIFGSICSLSGVLVIALPVPVIVSNFSRIYHQNQRADKRRAQKKARLARIRVAKTGSSNAYLHSKRNGLLNEALELTGTPEEEHMGKTTSLIESQHHHLLHCLEKTTGLSYLVDDPLLSVRTSTIKNHEFIDEQMFEQNCMESSMQNYPSTRSPSLSSHPGLTTTCCSRRSKKTTHLPNSNLPATRLRSMQELSTIHIQGSEQPSLTTSRSSLNLKADDGLRPNCKTSQITTAIISIPTPPALTPEGESRPPPASPGPNTNIPSIASNVVKVSAL.

Topologically, residues 1-182 are cytoplasmic; that stretch reads MAAGVAAWLP…FENPHTSTLA (182 aa). The interaction with KCNIP1 and KCNIP2 stretch occupies residues 6-21; it reads AAWLPFARAAAIGWMP. Positions 70–78 are interaction with KCNIP1; sequence EKEFFFNED. Residues histidine 104, cysteine 110, cysteine 131, and cysteine 132 each contribute to the Zn(2+) site. At serine 153 the chain carries Phosphoserine. The helical transmembrane segment at 183-204 threads the bilayer; the sequence is LVFYYVTGFFIAVSVITNVVET. Over 205 to 223 the chain is Extracellular; sequence VPCGTVPGSKELPCGERYS. Residues 224-246 form a helical membrane-spanning segment; the sequence is VAFFCLDTACVMIFTVEYLLRLF. The Cytoplasmic segment spans residues 247–253; the sequence is AAPSRYR. The chain crosses the membrane as a helical span at residues 254–277; it reads FIRSVMSIIDVVAIMPYYIGLVMT. Residues 278–283 lie on the Extracellular side of the membrane; sequence NNEDVS. A helical; Voltage-sensor membrane pass occupies residues 284-306; it reads GAFVTLRVFRVFRIFKFSRHSQG. Over 307-318 the chain is Cytoplasmic; sequence LRILGYTLKSCA. The chain crosses the membrane as a helical span at residues 319 to 343; it reads SELGFLLFSLTMAIIIFATVMFYAE. Residues 344 to 352 are Extracellular-facing; it reads KGSSASKFT. Positions 353–366 form an intramembrane region, helical; it reads SIPASFWYTIVTMT. K(+) contacts are provided by threonine 367, leucine 368, glycine 369, and tyrosine 370. Residues 367 to 372 carry the Selectivity filter motif; sequence TLGYGD. The stretch at 367–374 is an intramembrane region; sequence TLGYGDMV. The helical transmembrane segment at 378–400 threads the bilayer; sequence IAGKIFGSICSLSGVLVIALPVP. Residues 401–655 lie on the Cytoplasmic side of the membrane; that stretch reads VIVSNFSRIY…ASNVVKVSAL (255 aa). A Phosphothreonine modification is found at threonine 459. Residues 470–487 form an interaction with KCNIP1 and KCNIP2 region; that stretch reads SLIESQHHHLLHCLEKTT. The interval 472–487 is mediates dendritic targeting; that stretch reads IESQHHHLLHCLEKTT. Positions 525–548 are enriched in polar residues; sequence MQNYPSTRSPSLSSHPGLTTTCCS. A disordered region spans residues 525–565; it reads MQNYPSTRSPSLSSHPGLTTTCCSRRSKKTTHLPNSNLPAT. At serine 569 the chain carries Phosphoserine; by CaMK2D. A Phosphoserine modification is found at serine 585. The segment at 615–655 is disordered; that stretch reads ISIPTPPALTPEGESRPPPASPGPNTNIPSIASNVVKVSAL. Residues 637–647 are compositionally biased toward polar residues; the sequence is GPNTNIPSIAS.

Belongs to the potassium channel family. D (Shal) (TC 1.A.1.2) subfamily. Kv4.3/KCND3 sub-subfamily. Homotetramer. Heterotetramer with KCND2. Associates with the regulatory subunits KCNIP3 and KCNIP4. Interacts with KCNE1, KCNE2, SCN1B and KCNAB1 and DLG1. Component of heteromultimeric potassium channels. Identified in potassium channel complexes containing KCND1, KCND2, KCND3, KCNIP1, KCNIP2, KCNIP3, KCNIP4, DPP6 and DPP10. Interacts with KCNIP1; each KCNIP1 monomer interacts with two adjacent KCND3 subunits, through both the N-terminal inactivation ball of a KCND3 subunit and a C-terminal helix from the adjacent KCND3 subunit, clamping them together; this interaction stabilizes the tetrameric form and modulates the channel gating kinetics namely channel activation and inactivation kinetics and rate of recovery from inactivation. Interacts with DPP6; this interaction modulates the channel gating kinetics namely channel activation and inactivation kinetics and rate of recovery from inactivation. Interacts with KCNIP2; each KCNIP2 monomer interacts with two adjacent KCND3 subunits, through both the N-terminal inactivation ball of a KCND3 subunit and a C-terminal helix from the adjacent KCND3 subunit, clamping them together; this interaction modulates the channel gating kinetics. In terms of processing, regulated through phosphorylation at Ser-569 by CaMK2D. In terms of tissue distribution, highly expressed in heart and brain, in particular in cortex, cerebellum, amygdala and caudate nucleus. Detected at lower levels in liver, skeletal muscle, kidney and pancreas.

Its subcellular location is the cell membrane. The protein resides in the sarcolemma. It localises to the cell projection. The protein localises to the dendrite. The enzyme catalyses K(+)(in) = K(+)(out). Its function is as follows. Pore-forming (alpha) subunit of voltage-gated A-type potassium channels that mediates transmembrane potassium transport in excitable membranes, in brain and heart. In cardiomyocytes, may generate the transient outward potassium current I(To). In neurons, may conduct the transient subthreshold somatodendritic A-type potassium current (ISA). Kinetics properties are characterized by fast activation at subthreshold membrane potentials, rapid inactivation, and quick recovery from inactivation. Channel properties are modulated by interactions with regulatory subunits. Interaction with the regulatory subunits KCNIP1 or KCNIP2 modulates the channel gating kinetics namely channel activation and inactivation kinetics and rate of recovery from inactivation. Likewise, interaction with DPP6 modulates the channel gating kinetics namely channel activation and inactivation kinetics. This Homo sapiens (Human) protein is A-type voltage-gated potassium channel KCND3 (KCND3).